Here is a 140-residue protein sequence, read N- to C-terminus: Phospholipase A2 (140 aa).

An N-terminal signal peptide occupies residues 1–21; it reads MNPAHLLVLAAVCISLSGASS. A propeptide spanning residues 22-27 is cleaved from the precursor; sequence IAPQPL. 7 cysteine pairs are disulfide-bonded: Cys-38/Cys-97, Cys-52/Cys-139, Cys-54/Cys-70, Cys-69/Cys-125, Cys-76/Cys-118, Cys-86/Cys-111, and Cys-104/Cys-116. Asn-39 carries an N-linked (GlcNAc...) asparagine glycan. Ca(2+) is bound by residues Tyr-53, Gly-55, and Gly-57. Residue His-73 is part of the active site. Residue Asp-74 participates in Ca(2+) binding. N-linked (GlcNAc...) asparagine glycosylation is present at Asn-107. Asp-119 is a catalytic residue.

This sequence belongs to the phospholipase A2 family. Group I subfamily. D49 sub-subfamily. It depends on Ca(2+) as a cofactor. In terms of tissue distribution, expressed by the venom gland.

The protein resides in the secreted. It carries out the reaction a 1,2-diacyl-sn-glycero-3-phosphocholine + H2O = a 1-acyl-sn-glycero-3-phosphocholine + a fatty acid + H(+). Its function is as follows. PLA2 catalyzes the calcium-dependent hydrolysis of the 2-acyl groups in 3-sn-phosphoglycerides. This Micrurus altirostris (Uruguayan coral snake) protein is Phospholipase A2.